A 666-amino-acid chain; its full sequence is NAD(P)H-quinone oxidoreductase subunit 5, organellar chromatophore 1 (666 aa).

Helical transmembrane passes span 8–28 (LVWLIPILPFIGAFLVGFGLI), 41–61 (AALLLISSVGISAVLSFMVLA), 90–110 (VDPIGATMLALVSTVAILVMV), 121–141 (SYVRFFTYLGLFTSSMLALIL), 145–165 (LLEIYVFWELVGMCSYLLIGF), 190–210 (FLLGILGLFWATNSFDFQIVA), 220–240 (GSIPHWAAIALCLLLFMGPMA), 259–279 (TPISALIHAATMVAAGVFLVA), 293–313 (IIVAVIGTITCFLGASIALIQ), 328–348 (LGYMMLAMGCGAPVAGMFHLI), 396–416 (GITFFIGCVAISGIPPLAGFW), 428–448 (SYPLLWGVGLFTAGLTAFYMF), 497–517 (TLPLVILSVPSVLIGFLGSPW), 542–562 (FLPLAIASVMISTCGIVIATI), and 643–663 (GRPQFYALIIFGGVISLIVIF).

The protein belongs to the complex I subunit 5 family. In terms of assembly, NDH is composed of at least 16 different subunits, 5 of which are encoded in the nucleus.

It localises to the plastid. It is found in the organellar chromatophore thylakoid membrane. The enzyme catalyses a plastoquinone + NADH + (n+1) H(+)(in) = a plastoquinol + NAD(+) + n H(+)(out). It carries out the reaction a plastoquinone + NADPH + (n+1) H(+)(in) = a plastoquinol + NADP(+) + n H(+)(out). In terms of biological role, NDH shuttles electrons from NAD(P)H:plastoquinone, via FMN and iron-sulfur (Fe-S) centers, to quinones in the photosynthetic chain and possibly in a chloroplast respiratory chain. The immediate electron acceptor for the enzyme in this species is believed to be plastoquinone. Couples the redox reaction to proton translocation, and thus conserves the redox energy in a proton gradient. The sequence is that of NAD(P)H-quinone oxidoreductase subunit 5, organellar chromatophore 1 (ndhF1) from Paulinella chromatophora.